The chain runs to 129 residues: MLMRKKKLLSRISFGSLFLLCGTILSACTWIQANLRNLLKETTGKDFDLSKAIKIPEGRQNLINSLKKSYEVNPKDTTKLLLDAWKQSSEEGKLGIADLDFDQVTNPTEKDPFKNGAKGRAFRHWISKY.

The first 27 residues, 1–27, serve as a signal peptide directing secretion; sequence MLMRKKKLLSRISFGSLFLLCGTILSA. Cysteine 28 carries the N-palmitoyl cysteine lipid modification. Cysteine 28 carries the S-diacylglycerol cysteine lipid modification.

This sequence belongs to the MG439/MG440 family.

It localises to the cell membrane. This is an uncharacterized protein from Mycoplasma pneumoniae (strain ATCC 29342 / M129 / Subtype 1) (Mycoplasmoides pneumoniae).